A 392-amino-acid chain; its full sequence is Spermatogenesis associated 6-like protein (392 aa).

2 positions are modified to phosphoserine: Ser-260 and Ser-263. The segment covering 286 to 301 has biased composition (low complexity); that stretch reads SCLDSSQFGKSSSSKQ. A disordered region spans residues 286–305; the sequence is SCLDSSQFGKSSSSKQGDAD.

It belongs to the SPATA6 family.

The sequence is that of Spermatogenesis associated 6-like protein (SPATA6L) from Homo sapiens (Human).